A 258-amino-acid polypeptide reads, in one-letter code: MGVEKIKAAFENGKKAFIPYVMGGDGGLEKLKERIRFLDEAGASIVEIGIPFSDPVADGPTIQRAGKRALDSGVTLKGIFQALAEVRKEVQMPFVLMTYLNPVLAFGKERFIENCIEAGVDGIIVPDLPYEEQNIIAPLLREVNIALIPLVTVTSPIERIEKITSESEGFVYAVTVAGVTGVRQNFKEEIHSYLEKVKSHVNLPVVAGFGISTKEHVEEMVTICDGVVVGSKVIELLENEKREEICELIYATKQKEEA.

Active-site proton acceptor residues include Glu47 and Asp58.

The protein belongs to the TrpA family. As to quaternary structure, tetramer of two alpha and two beta chains.

The enzyme catalyses (1S,2R)-1-C-(indol-3-yl)glycerol 3-phosphate + L-serine = D-glyceraldehyde 3-phosphate + L-tryptophan + H2O. The protein operates within amino-acid biosynthesis; L-tryptophan biosynthesis; L-tryptophan from chorismate: step 5/5. The alpha subunit is responsible for the aldol cleavage of indoleglycerol phosphate to indole and glyceraldehyde 3-phosphate. The sequence is that of Tryptophan synthase alpha chain from Bacillus cereus (strain ATCC 14579 / DSM 31 / CCUG 7414 / JCM 2152 / NBRC 15305 / NCIMB 9373 / NCTC 2599 / NRRL B-3711).